A 644-amino-acid chain; its full sequence is UvrABC system protein C (644 aa).

The GIY-YIG domain occupies 47–125; it reads ARPGVYRMLD…IKRYRPPYNV (79 aa). The region spanning 235–270 is the UVR domain; that stretch reads TAVQKRLGEAMTRAADAMDFEQAAVLRDRLKALTFI.

It belongs to the UvrC family. As to quaternary structure, interacts with UvrB in an incision complex.

The protein localises to the cytoplasm. The UvrABC repair system catalyzes the recognition and processing of DNA lesions. UvrC both incises the 5' and 3' sides of the lesion. The N-terminal half is responsible for the 3' incision and the C-terminal half is responsible for the 5' incision. This is UvrABC system protein C from Sphingopyxis alaskensis (strain DSM 13593 / LMG 18877 / RB2256) (Sphingomonas alaskensis).